Reading from the N-terminus, the 358-residue chain is Methionine aminopeptidase 2 (358 aa).

His109 lines the substrate pocket. 3 residues coordinate a divalent metal cation: Asp130, Asp141, and His210. Residue His218 participates in substrate binding. Residues Glu243 and Glu339 each contribute to the a divalent metal cation site.

It belongs to the peptidase M24A family. Methionine aminopeptidase eukaryotic type 2 subfamily. It depends on Co(2+) as a cofactor. Requires Zn(2+) as cofactor. Mn(2+) serves as cofactor. The cofactor is Fe(2+).

It localises to the cytoplasm. It carries out the reaction Release of N-terminal amino acids, preferentially methionine, from peptides and arylamides.. In terms of biological role, cotranslationally removes the N-terminal methionine from nascent proteins. The N-terminal methionine is often cleaved when the second residue in the primary sequence is small and uncharged (Met-Ala-, Cys, Gly, Pro, Ser, Thr, or Val). This Encephalitozoon intestinalis (strain ATCC 50506) (Microsporidian parasite) protein is Methionine aminopeptidase 2.